Here is a 180-residue protein sequence, read N- to C-terminus: Small ribosomal subunit protein uS4 (180 aa).

The 63-residue stretch at 104-166 folds into the S4 RNA-binding domain; that stretch reads RRLQTIVHRK…PTSPFKNNPP (63 aa). The tract at residues 155-180 is disordered; that stretch reads FYPTSPFKNNPPTAGQGEVNVEQKGN.

This sequence belongs to the universal ribosomal protein uS4 family. Part of the 30S ribosomal subunit. Contacts protein S5. The interaction surface between S4 and S5 is involved in control of translational fidelity.

One of the primary rRNA binding proteins, it binds directly to 16S rRNA where it nucleates assembly of the body of the 30S subunit. Functionally, with S5 and S12 plays an important role in translational accuracy. The protein is Small ribosomal subunit protein uS4 of Metallosphaera sedula (strain ATCC 51363 / DSM 5348 / JCM 9185 / NBRC 15509 / TH2).